The chain runs to 1304 residues: TPR-containing protein DDB_G0280363 (1304 aa).

6 disordered regions span residues 19-85, 153-195, 296-334, 447-477, 576-687, and 706-728; these read QQHH…HPQQ, NINN…NSSL, LPSTNSSIVSRQQQLQQQQQKLKLKSSPSPISPFFYTQQ, GFNWSPSLQPDQSTSTNHTQAMLQQQQQRQQ, QNQQ…VTTI, and LTTVNHSKPPPNESKRGELVESP. Composition is skewed to low complexity over residues 25-44, 52-85, and 153-194; these read QQNNTQVQQQQQQHTTQFNQ, HQQHQQQQHHQQQHHQQQQQQQQQQQQQQQHPQQ, and NINN…NNSS. Polar residues predominate over residues 296-306; that stretch reads LPSTNSSIVSR. A compositionally biased stretch (low complexity) spans 307–316; the sequence is QQQLQQQQQK. Residues 448-465 show a composition bias toward polar residues; it reads FNWSPSLQPDQSTSTNHT. Low complexity-rich tracts occupy residues 466–477 and 576–597; these read QAMLQQQQQRQQ and QNQQQNQQQNQQQNQQHYPNQH. Positions 598-625 are enriched in basic residues; sequence HGQHQHNQHNQHHNQHHNQSHPNHKNQH. Low complexity predominate over residues 626-687; that stretch reads QKQNQTQQST…NNNTNNVTTI (62 aa). TPR repeat units lie at residues 769-802, 899-932, 978-1011, 1046-1079, 1084-1111, 1112-1150, and 1152-1184; these read WRVYLELADLANRQNNLKLARKFYRKVTSTQPYI, MKHVPWYGPIYQEAYKLEERCEEYERAINIVEKG, WKIYFEAAQIEERSKNLTLSRAAYVKSVELCPEN, SKLRSLVLLEYSRLEEYAGNINKSRRILKMAHVE, WKVFLESVLLEMRANNYEAAIKEAKESL, KIHSGAGRLWAALIQLNQLKGVKSQLNVFKKALQFVPKS, and EVWCEGARIALNNNELREARRFLEFAIQFTPQF.

The chain is TPR-containing protein DDB_G0280363 from Dictyostelium discoideum (Social amoeba).